An 83-amino-acid chain; its full sequence is Insect toxin 2-13 (83 aa).

Positions 1-21 are cleaved as a signal peptide; sequence MKLLLLLIITASMLIEGLVNA. Residues 22-80 enclose the LCN-type CS-alpha/beta domain; the sequence is DVYIRRHDGCKISCTVNDKYCDNECKSEGGSYGYCYAFGCWCEGLPNDKAWKSETNTCG. 4 disulfides stabilise this stretch: cysteine 31–cysteine 79, cysteine 35–cysteine 56, cysteine 42–cysteine 61, and cysteine 46–cysteine 63. Glycine 80 carries the glycine amide modification.

It belongs to the long (4 C-C) scorpion toxin superfamily. Sodium channel inhibitor family. Beta subfamily. In terms of tissue distribution, expressed by the venom gland.

The protein resides in the secreted. In terms of biological role, depressant insect toxins cause a transient contraction paralysis followed by a slow flaccid paralysis. They bind voltage-independently to sodium channels (Nav) and block action potentials, primarily by depolarizing the axonal membrane and suppressing the sodium current. This Leiurus hebraeus (Hebrew deathstalker scorpion) protein is Insect toxin 2-13.